A 210-amino-acid chain; its full sequence is Outer-membrane lipoprotein LolB (210 aa).

Positions 1 to 26 (MSKLKIDTKRRFSLLIALVLIISLSS) are cleaved as a signal peptide. A lipid anchor (N-palmitoyl cysteine) is attached at cysteine 27. Cysteine 27 carries S-diacylglycerol cysteine lipidation.

This sequence belongs to the LolB family. Monomer.

It is found in the cell outer membrane. Its function is as follows. Plays a critical role in the incorporation of lipoproteins in the outer membrane after they are released by the LolA protein. The polypeptide is Outer-membrane lipoprotein LolB (Francisella tularensis subsp. holarctica (strain FTNF002-00 / FTA)).